Here is a 617-residue protein sequence, read N- to C-terminus: Zinc finger protein 613 (617 aa).

One can recognise a KRAB domain in the interval 8–78 (LTLEDVAVEF…ENEIHSQICP (71 aa)). C2H2-type zinc fingers lie at residues 204–226 (HVCTECGKAFLKKSRLIYHQRVH), 232–254 (HGCSICGKAFSRKSGLTEHQRNH), 260–282 (YECTECDKAFRWKSQLNAHQKIH), 288–310 (YICSDCGKGFIKKSRLINHQRVH), 316–338 (HGCSLCGKAFSKRSRLTEHQRTH), 344–366 (YECTECDKAFRWKSQLNAHQKAH), 372–394 (YICRDCGKGFIQKGNLIVHQRIH), 400–422 (YICNECGKGFIQKGNLLIHRRTH), 428–450 (YVCNECGKGFSQKTCLISHQRFH), 456–478 (FVCTECGKSCSHKSGLINHQRIH), 484–506 (YTCSDCGKAFRDKSCLNRHRRTH), and 512–535 (YGCSDCGKAFSHLSCLVYHKGMLH).

It belongs to the krueppel C2H2-type zinc-finger protein family.

It is found in the nucleus. Its function is as follows. May be involved in transcriptional regulation. This chain is Zinc finger protein 613 (ZNF613), found in Homo sapiens (Human).